The sequence spans 210 residues: Menaquinone reductase, multiheme cytochrome c subunit (210 aa).

A helical transmembrane segment spans residues 20–40; that stretch reads GGAAPFFVGLVVALVFGWWAF. Cys-67, Cys-70, His-71, Cys-88, Cys-91, His-92, Cys-140, Cys-143, His-144, Cys-152, Cys-155, His-156, Cys-186, Cys-189, His-190, Cys-205, Cys-208, and His-209 together coordinate heme.

This sequence belongs to the multiheme cytochrome c family. As to quaternary structure, the Qrc complex is composed of four subunits: QrcA, QrcB, QrcC and QrcD. Can form a supercomplex with the [NiFe] hydrogenase HynA1 and the tetraheme Type I cytochrome c3 TpIc(3), its physiological electron donors. Heme c serves as cofactor.

The protein localises to the cell inner membrane. In terms of biological role, component of the respiratory Qrc complex, that catalyzes the reduction of the menaquinone pool using electrons transferred from the reduced periplasmic cytochrome c3, and which is probably involved in sulfate respiration. Is likely essential for growth on H(2) or formate since the periplasmic hydrogenases and/or formate dehydrogenases act as primary electron donors for the Qrc complex. This Nitratidesulfovibrio vulgaris (strain ATCC 29579 / DSM 644 / CCUG 34227 / NCIMB 8303 / VKM B-1760 / Hildenborough) (Desulfovibrio vulgaris) protein is Menaquinone reductase, multiheme cytochrome c subunit.